The primary structure comprises 1358 residues: Xanthine dehydrogenase/oxidase (1358 aa).

The 2Fe-2S ferredoxin-type domain maps to 8 to 95 (DELVFFVNGK…HVAVTTVEGI (88 aa)). [2Fe-2S] cluster-binding residues include C47, C52, C55, C77, C117, C120, C152, and C154. Residues 255–440 (FKGERVMWIQ…LSVEIPYSKE (186 aa)) enclose the FAD-binding PCMH-type domain. Residues 283 to 290 (LVVGNTEV), F363, 373 to 377 (ALGGN), D386, L430, and K448 each bind FAD. Residues Q796 and F827 each coordinate Mo-molybdopterin. Substrate is bound by residues E831 and R909. R941 is a binding site for Mo-molybdopterin. The substrate site is built by F943 and T1039. A Mo-molybdopterin-binding site is contributed by A1108. The Proton acceptor role is filled by E1290.

The protein belongs to the xanthine dehydrogenase family. In terms of assembly, homodimer. Requires FAD as cofactor. The cofactor is Mo-molybdopterin. It depends on [2Fe-2S] cluster as a cofactor. As to expression, detected in liver (at protein level).

The protein localises to the peroxisome. Its subcellular location is the cytoplasm. It catalyses the reaction xanthine + NAD(+) + H2O = urate + NADH + H(+). It carries out the reaction hypoxanthine + NAD(+) + H2O = xanthine + NADH + H(+). The enzyme catalyses xanthine + O2 + H2O = urate + H2O2. In terms of biological role, key enzyme in purine degradation. Catalyzes the oxidation of hypoxanthine to xanthine. Catalyzes the oxidation of xanthine to uric acid. Contributes to the generation of reactive oxygen species. This is Xanthine dehydrogenase/oxidase (XDH) from Gallus gallus (Chicken).